The primary structure comprises 302 residues: Dihydroorotate dehydrogenase B (NAD(+)), catalytic subunit (302 aa).

FMN-binding positions include S23 and 47–48 (KG). Residues K47 and 71 to 75 (NSVGL) each bind substrate. Residues N101 and N128 each contribute to the FMN site. N128 contacts substrate. The active-site Nucleophile is the C131. Residues K166 and I192 each coordinate FMN. 193–194 (NT) is a substrate binding site. FMN-binding positions include G218, 244–245 (GG), and 266–267 (GT).

The protein belongs to the dihydroorotate dehydrogenase family. Type 1 subfamily. Heterotetramer of 2 PyrK and 2 PyrD type B subunits. FMN serves as cofactor.

The protein localises to the cytoplasm. The catalysed reaction is (S)-dihydroorotate + NAD(+) = orotate + NADH + H(+). The protein operates within pyrimidine metabolism; UMP biosynthesis via de novo pathway; orotate from (S)-dihydroorotate (NAD(+) route): step 1/1. In terms of biological role, catalyzes the conversion of dihydroorotate to orotate with NAD(+) as electron acceptor. The protein is Dihydroorotate dehydrogenase B (NAD(+)), catalytic subunit (pyrD) of Alkaliphilus oremlandii (strain OhILAs) (Clostridium oremlandii (strain OhILAs)).